A 95-amino-acid polypeptide reads, in one-letter code: Large ribosomal subunit protein bL25 (95 aa).

It belongs to the bacterial ribosomal protein bL25 family. In terms of assembly, part of the 50S ribosomal subunit; part of the 5S rRNA/L5/L18/L25 subcomplex. Contacts the 5S rRNA. Binds to the 5S rRNA independently of L5 and L18.

In terms of biological role, this is one of the proteins that binds to the 5S RNA in the ribosome where it forms part of the central protuberance. The chain is Large ribosomal subunit protein bL25 from Shewanella baltica (strain OS223).